Reading from the N-terminus, the 37-residue chain is Large ribosomal subunit protein bL36 (37 aa).

Belongs to the bacterial ribosomal protein bL36 family.

The polypeptide is Large ribosomal subunit protein bL36 (Aliarcobacter butzleri (strain RM4018) (Arcobacter butzleri)).